The primary structure comprises 913 residues: Striatin-interacting protein homolog (913 aa).

Low complexity-rich tracts occupy residues 177–188 (QQQQQQQQNENE), 195–204 (TNFTTTTTTT), and 791–811 (NNNNSNNNNNNNNNNSTNNDN). Disordered regions lie at residues 177–204 (QQQQQQQQNENEGSGEGGTNFTTTTTTT) and 791–814 (NNNNSNNNNNNNNNNSTNNDNGLT).

The protein belongs to the STRIP family.

The sequence is that of Striatin-interacting protein homolog (fam40) from Dictyostelium discoideum (Social amoeba).